We begin with the raw amino-acid sequence, 352 residues long: fMet-Leu-Phe receptor (352 aa).

At 1-27 (MDSNASLPLNVSGGTQATPAGLVVLDV) the chain is on the extracellular side. N-linked (GlcNAc...) asparagine glycosylation is found at N4 and N10. The helical transmembrane segment at 28–50 (FSYLILVVTFVLGVLGNGLVIWV) threads the bilayer. Over 51–61 (TGFRMTHTVTT) the chain is Cytoplasmic. A helical membrane pass occupies residues 62–83 (ISYLNLALADFSFTSTLPFFIV). Topologically, residues 84-100 (TKALGGHWPFGWFLCKF) are extracellular. An intrachain disulfide couples C98 to C178. Residues 101 to 121 (VFTIVDINLFGSVFLIALIAL) traverse the membrane as a helical segment. Over 122–140 (DRCICVLHPVWAQNHRNVS) the chain is Cytoplasmic. A helical transmembrane segment spans residues 141-162 (LAKKVIVGPWICALLLTLPVII). The Extracellular portion of the chain corresponds to 163–207 (RVTTLSHPRAPGKMACTFDWSPWTEDPAEKLKVAISMFMVRGIIR). Residues 208–228 (FIIGFSTPMSIVAVCYGLIAT) form a helical membrane-spanning segment. Topologically, residues 229-244 (KIHRQGLIKSSRPLRV) are cytoplasmic. The helical transmembrane segment at 245-268 (LSFVVASFLLCWSPYQIAALIATV) threads the bilayer. Residues 269 to 287 (RIRELLLGMGKDLRIVLDV) lie on the Extracellular side of the membrane. A helical membrane pass occupies residues 288 to 307 (TSFVAFFNSCLNPMLYVFMG). At 308 to 352 (QDFRERLIHSLPASLERALSEDSAQTSDTGTNSTSAPAEAELQAI) the chain is on the cytoplasmic side.

The protein belongs to the G-protein coupled receptor 1 family. Post-translationally, phosphorylated; which is necessary for desensitization. In terms of tissue distribution, neutrophils.

It is found in the cell membrane. High affinity receptor for N-formyl-methionyl peptides (fMLP), which are powerful neutrophil chemotactic factors. Binding of fMLP to the receptor stimulates intracellular calcium mobilization and superoxide anion release. This response is mediated via a G-protein that activates a phosphatidylinositol-calcium second messenger system. Receptor for TAFA4, mediates its effects on chemoattracting macrophages, promoting phagocytosis and increasing ROS release. Receptor for cathepsin CTSG, leading to increased phagocyte chemotaxis. This Oryctolagus cuniculus (Rabbit) protein is fMet-Leu-Phe receptor (FPR1).